The chain runs to 880 residues: DNA mismatch repair protein MutS (880 aa).

635–642 provides a ligand contact to ATP; that stretch reads GPNMGGKS.

This sequence belongs to the DNA mismatch repair MutS family.

This protein is involved in the repair of mismatches in DNA. It is possible that it carries out the mismatch recognition step. This protein has a weak ATPase activity. The polypeptide is DNA mismatch repair protein MutS (Nitrosomonas eutropha (strain DSM 101675 / C91 / Nm57)).